A 339-amino-acid polypeptide reads, in one-letter code: MSTQTVALDIMGGDIGPSETVPAVVQALSLLPQLKLILVGDQHQTTALLQQHGLLTHPRVRFVHASQVVGMGDKPIVALRTLKDSSMRVVLNLVKAGEADACVSAGNTGALMAMAKCVLKSLPGVDRPALIKALPTLSGKRTVMLDLGANVSCDADTLLQFAVMGSVVAEKVEGIASPRVALLNVGEEEIKGNDLVRHSAELLRQCSALNFVGFVEGDRIFSGECDVIVCDGFVGNVALKTAEGVVRMMAQLAGYPRKKRSFLGRLAGFMFKRRFSYLNPDQYNGASLLGLRGIVVKSHGRAERHALCNAILLAAQEAKHQLPLQIADRLESVFSDRDL.

This sequence belongs to the PlsX family. Homodimer. Probably interacts with PlsY.

It localises to the cytoplasm. It catalyses the reaction a fatty acyl-[ACP] + phosphate = an acyl phosphate + holo-[ACP]. Its pathway is lipid metabolism; phospholipid metabolism. In terms of biological role, catalyzes the reversible formation of acyl-phosphate (acyl-PO(4)) from acyl-[acyl-carrier-protein] (acyl-ACP). This enzyme utilizes acyl-ACP as fatty acyl donor, but not acyl-CoA. The protein is Phosphate acyltransferase of Aeromonas salmonicida (strain A449).